A 102-amino-acid polypeptide reads, in one-letter code: Aspartyl/glutamyl-tRNA(Asn/Gln) amidotransferase subunit C (102 aa).

This sequence belongs to the GatC family. Heterotrimer of A, B and C subunits.

The catalysed reaction is L-glutamyl-tRNA(Gln) + L-glutamine + ATP + H2O = L-glutaminyl-tRNA(Gln) + L-glutamate + ADP + phosphate + H(+). It catalyses the reaction L-aspartyl-tRNA(Asn) + L-glutamine + ATP + H2O = L-asparaginyl-tRNA(Asn) + L-glutamate + ADP + phosphate + 2 H(+). Its function is as follows. Allows the formation of correctly charged Asn-tRNA(Asn) or Gln-tRNA(Gln) through the transamidation of misacylated Asp-tRNA(Asn) or Glu-tRNA(Gln) in organisms which lack either or both of asparaginyl-tRNA or glutaminyl-tRNA synthetases. The reaction takes place in the presence of glutamine and ATP through an activated phospho-Asp-tRNA(Asn) or phospho-Glu-tRNA(Gln). The polypeptide is Aspartyl/glutamyl-tRNA(Asn/Gln) amidotransferase subunit C (Bordetella bronchiseptica (strain ATCC BAA-588 / NCTC 13252 / RB50) (Alcaligenes bronchisepticus)).